The primary structure comprises 580 residues: Lysine--tRNA ligase (580 aa).

A 'HIGH' region motif is present at residues 43 to 51 (PSGPIHLGN). Residues 178-209 (KAPAKKSQKPLDEAELEAAEGSGAAAEDDGSS) are disordered. Low complexity predominate over residues 196-209 (AEGSGAAAEDDGSS). The 'KMSKS' region motif lies at 325–329 (KMSSS).

The protein belongs to the class-I aminoacyl-tRNA synthetase family.

Its subcellular location is the cytoplasm. The catalysed reaction is tRNA(Lys) + L-lysine + ATP = L-lysyl-tRNA(Lys) + AMP + diphosphate. This chain is Lysine--tRNA ligase (lysS), found in Streptomyces coelicolor (strain ATCC BAA-471 / A3(2) / M145).